A 358-amino-acid polypeptide reads, in one-letter code: Glucose 1-dehydrogenase (358 aa).

C38 contacts Zn(2+). T40 is a binding site for substrate. The Zn(2+) site is built by H65, E66, C92, C95, C98, and C106. E113, E149, and N153 together coordinate substrate. E149 is a Zn(2+) binding site. NADP(+) contacts are provided by residues 187–190 (SGPI), 209–211 (NRR), 268–270 (FGT), 296–298 (SVN), and K342. Residue N298 participates in substrate binding.

It belongs to the zinc-containing alcohol dehydrogenase family. Glucose 1-dehydrogenase subfamily. It depends on Zn(2+) as a cofactor.

The enzyme catalyses D-glucose + NAD(+) = D-glucono-1,5-lactone + NADH + H(+). It carries out the reaction D-glucose + NADP(+) = D-glucono-1,5-lactone + NADPH + H(+). Catalyzes the NAD(P)(+)-dependent oxidation of D-glucose to D-gluconate via gluconolactone. Can utilize both NAD(+) and NADP(+) as electron acceptor. Is involved in the degradation of glucose through a non-phosphorylative variant of the Entner-Doudoroff pathway. In Metallosphaera sedula (strain ATCC 51363 / DSM 5348 / JCM 9185 / NBRC 15509 / TH2), this protein is Glucose 1-dehydrogenase.